The sequence spans 371 residues: RNA-binding protein 48 (371 aa).

The RRM domain occupies Gln46 to Glu124. Disordered regions lie at residues Glu220 to Pro249 and Glu343 to Ile371.

This sequence belongs to the RBM48 family. In terms of assembly, component of the minor spliceosome. Within this complex, interacts with ARMC7 and PRPF8/PRP8.

As a component of the minor spliceosome, involved in the splicing of U12-type introns in pre-mRNAs. The protein is RNA-binding protein 48 (Rbm48) of Rattus norvegicus (Rat).